Consider the following 398-residue polypeptide: Diaminopropionate ammonia-lyase (398 aa).

Lys77 carries the N6-(pyridoxal phosphate)lysine modification.

Belongs to the diaminopropionate ammonia-lyase family. In terms of assembly, homodimer. Requires pyridoxal 5'-phosphate as cofactor.

The catalysed reaction is (S)-2,3-diaminopropanoate + H2O + H(+) = pyruvate + 2 NH4(+). It carries out the reaction (R)-2,3-diaminopropanoate + H2O + H(+) = pyruvate + 2 NH4(+). Catalyzes the alpha,beta-elimination reaction of both L- and D-alpha,beta-diaminopropionate (DAP) to form pyruvate and ammonia. The D-isomer of serine is degraded to pyruvate, though very poorly; other amino acids (L-serine, D- and L-threonine, D- and L-beta-Cl-alanine) are not substrates. The protein is Diaminopropionate ammonia-lyase (ygeX) of Escherichia coli O157:H7.